Consider the following 520-residue polypeptide: MEFPEHSRHLLQCLSEQRHQGFLCDCTVLVGDAHFRAHRAVLASCSMYFHLFYKDQLDKRDIVHLNSDIVTAPAFALLLEFMYEGILQFKGLPIEDVLAAASYLHMYDIVKVCKKKLKEKATTDSTKKEEDTSSFSDKVECLSDGSSHMAGDLPSDEDDVEDEKINILPGKTDLATESRNMWIRLPTESASIPRTVGEAETHTTAAGKTAVSPCSSTGSLSHRSAISMGDSADVDCVLDLSVKSSLSGTETMNNSYLSSQEILRNSLVQVKVEKEATCDKNDIDTTEYDIERNTVKESVSSNIRASYEPVHLAPIREDSVLRELDHDDKASDDDMITLENERVQMEANTDNSLLPYVPNIISPTGQIFMCPLCNKVFPSPHILQIHLSTHFREQEGIRSKPANDVHVPTCSLCGKTFSCMYTLKRHERTHSGEKPYTCTQCGKSFQYSHNLSRHAVVHTREKPHACKWCERRFTQSGDLYRHIRKFHCELVNSLSVKSETLGLPAVRDWTLEDSSQELWK.

In terms of domain architecture, BTB spans 24 to 91 (CDCTVLVGDA…MYEGILQFKG (68 aa)). A disordered region spans residues 121–140 (ATTDSTKKEEDTSSFSDKVE). C2H2-type zinc fingers lie at residues 368–390 (FMCP…LSTH), 408–430 (PTCS…ERTH), 436–458 (YTCT…AVVH), and 464–487 (HACK…RKFH).

This sequence belongs to the krueppel C2H2-type zinc-finger protein family. ZBTB18 subfamily.

It localises to the nucleus. Its function is as follows. Transcriptional repressor that plays a role in various developmental processes. Specifically binds the consensus DNA sequence 5'-[AC]ACATCTG[GT][AC]-3' which contains the E box core, and acts by recruiting chromatin remodeling multiprotein complexes. This Xenopus laevis (African clawed frog) protein is Zinc finger and BTB domain-containing protein 18 (zbtb18).